We begin with the raw amino-acid sequence, 214 residues long: Single-pass membrane and coiled-coil domain-containing protein 1 (214 aa).

Residues 6–42 (TTLISLKEAMKRVDHKLQALETQFKELDFTKDNLMQK) are a coiled coil. The helical transmembrane segment at 65 to 81 (ALQLTSMELNILYSYVI) threads the bilayer.

It localises to the membrane. This Homo sapiens (Human) protein is Single-pass membrane and coiled-coil domain-containing protein 1 (SMCO1).